We begin with the raw amino-acid sequence, 617 residues long: MDLKTAVFNAARDGKLRLLTKLLASKSKEEVSSLISEKTNGATPLLMAARYGHLDMVEFLLEQCSASIEVGGSVNFDGETIEGAPPLWAASAAGHLKVVQSLLNHGASVNNTTLTNSTPLRAACFDGHLEIVKYLVEHKADLEVSNRHGHTCLMISCYKGHKEIAQYLLEKGADVNRKSVKGNTALHDCAESGSLDIMKMLLMYCAKMEKDGYGMTPLLSASVTGHTNIVDFLTHHAQTSKTERINALELLGATFVDKKRDLLGALKYWKKAMNMRYSDRTNIISKPVPQTLIMAYDYAKEVNSAEELEGLIADPDEMRMQALLIRERILGPSHPDTSYYIRYRGAVYADSGNFKRCINLWKYALDMQQNNLDPLSPMTASSLLSFAELFSFMLQDRAKGLLGTTVTFDDLMGILCKSVLEIERAIKQTQCPADPLQLNKALSIILHLICLLEKVPCTLEQDHFKKQTIYRFLKLHPRGKNNFSPLHLAVDKNTTCVGRYPVCKFPSLQVTAILIECGADVNVRDSDDNSPLHIAALNNHPDIMNLLIKSGAHFDATNLHKQTASDLLDEKEIAKNLIQPINHTTLQCLAARVIVNHRIYYKGHIPEKLETFVSLHR.

Met1 is subject to N-acetylmethionine. ANK repeat units follow at residues 2-31 (DLKT…KEEV), 40-70 (NGAT…SIEV), 82-111 (EGAP…SVNN), 115-144 (TNST…DLEV), 148-177 (HGHT…DVNR), 181-210 (KGNT…KMEK), and 213-242 (YGMT…TSKT). 2 TPR repeats span residues 245 to 279 (INAL…RYSD) and 338 to 371 (SYYI…QQNN). ANK repeat units lie at residues 481–523 (NNFS…DVNV) and 527–556 (DDNS…HFDA).

The protein belongs to the fem-1 family. As to quaternary structure, component of a CRL2 E3 ubiquitin-protein ligase complex, also named ECS (Elongin BC-CUL2/5-SOCS-box protein) complex, composed of CUL2, Elongin BC (ELOB and ELOC), RBX1 and substrate-specific adapter FEM1C.

It participates in protein modification; protein ubiquitination. Functionally, substrate-recognition component of a Cul2-RING (CRL2) E3 ubiquitin-protein ligase complex of the DesCEND (destruction via C-end degrons) pathway, which recognizes a C-degron located at the extreme C terminus of target proteins, leading to their ubiquitination and degradation. The C-degron recognized by the DesCEND pathway is usually a motif of less than ten residues and can be present in full-length proteins, truncated proteins or proteolytically cleaved forms. The CRL2(FEM1C) complex specifically recognizes proteins with an arginine at the C-terminus: recognizes and binds proteins ending with -Lys/Arg-Xaa-Arg and -Lys/Arg-Xaa-Xaa-Arg C-degrons, such as SIL1 or OR51B2, leading to their ubiquitination and degradation. The CRL2(FEM1C) complex mediates ubiquitination and degradation of truncated MSRB1/SEPX1 selenoproteins produced by failed UGA/Sec decoding. The polypeptide is Protein fem-1 homolog C (Bos taurus (Bovine)).